We begin with the raw amino-acid sequence, 468 residues long: Ribulose bisphosphate carboxylase large chain (468 aa).

Position 7 is an N6,N6,N6-trimethyllysine (Lys-7). Asn-116 and Thr-166 together coordinate substrate. Residue Lys-168 is the Proton acceptor of the active site. Lys-170 lines the substrate pocket. The Mg(2+) site is built by Lys-194, Asp-196, and Glu-197. Lys-194 carries the post-translational modification N6-carboxylysine. His-287 functions as the Proton acceptor in the catalytic mechanism. 3 residues coordinate substrate: Arg-288, His-320, and Ser-372.

It belongs to the RuBisCO large chain family. Type I subfamily. As to quaternary structure, heterohexadecamer of 8 large chains and 8 small chains. It depends on Mg(2+) as a cofactor.

Its subcellular location is the plastid. It localises to the chloroplast. It carries out the reaction 2 (2R)-3-phosphoglycerate + 2 H(+) = D-ribulose 1,5-bisphosphate + CO2 + H2O. The enzyme catalyses D-ribulose 1,5-bisphosphate + O2 = 2-phosphoglycolate + (2R)-3-phosphoglycerate + 2 H(+). Functionally, ruBisCO catalyzes two reactions: the carboxylation of D-ribulose 1,5-bisphosphate, the primary event in carbon dioxide fixation, as well as the oxidative fragmentation of the pentose substrate in the photorespiration process. Both reactions occur simultaneously and in competition at the same active site. This chain is Ribulose bisphosphate carboxylase large chain, found in Couroupita guianensis (Cannonball tree).